A 171-amino-acid chain; its full sequence is Neudesin (171 aa).

An N-terminal signal peptide occupies residues 1-30 (MARPAPWWRLRLLAALVLALALVPVPSAWA). Positions 43 to 128 (VRLFTEEELA…KELEALDDVF (86 aa)) constitute a Cytochrome b5 heme-binding domain. Residue Lys-135 is modified to N6-acetyllysine.

Belongs to the cytochrome b5 family. MAPR subfamily. In terms of assembly, interacts with PINK1 and PARK7. In the embryo, expressed most abundantly in brain and spinal cord. Widely expressed in adult tissues including brain, heart, lung and kidney. In brain, expressed in neurons but not in glial cells. In the hypothalamus is expressed primarily in the paraventricular nucleus (PVN), with lower levels of expression in the arcuate nucleus (ARC).

It localises to the secreted. The protein localises to the extracellular space. The protein resides in the mitochondrion. Its subcellular location is the endoplasmic reticulum. In terms of biological role, acts as a neurotrophic factor in postnatal mature neurons, enhancing neuronal survival. Promotes cell proliferation and neurogenesis in undifferentiated neural pro-genitor cells at the embryonic stage and inhibits differentiation of astrocytes. Its neurotrophic activity is exerted via MAPK1/ERK2, MAPK3/ERK1 and AKT1/AKT pathways. Neurotrophic activity is enhanced by binding to heme. Also acts as an anorexigenic neurotrophic factor that contributes to energy balance. This is Neudesin from Mus musculus (Mouse).